A 140-amino-acid chain; its full sequence is Ribosome maturation factor RimP (140 aa).

The protein belongs to the RimP family.

The protein resides in the cytoplasm. Functionally, required for maturation of 30S ribosomal subunits. The chain is Ribosome maturation factor RimP from Campylobacter lari (strain RM2100 / D67 / ATCC BAA-1060).